A 313-amino-acid chain; its full sequence is Protein FixB (313 aa).

255-283 lines the FAD pocket; that stretch reads LYLAVGISGQIQHMVGANASQTIFAINKD.

The protein belongs to the ETF alpha-subunit/FixB family. Heterodimer of FixA and FixB.

It functions in the pathway amine and polyamine metabolism; carnitine metabolism. Its function is as follows. Required for anaerobic carnitine reduction. May bring reductant to CaiA. This Escherichia coli O157:H7 protein is Protein FixB.